A 199-amino-acid chain; its full sequence is MKAEQTPLSWDTPGLLAGVDEAGRGPLMGPVVAAAVILDELNPIKGLADSKKLTPQRREALYDEIRAKALCCSIALATAEEIDRLNILQATMLAMRRAVESLRLKPNKVLVDGNRLPTLAIVSEAVIGGDAIVPAISAASILAKVYRDRWCAEFHLEYPQYGFASHKGYSTAEHLAALREHGACPQHRRSFAPVAEVLR.

The region spanning 14–199 (GLLAGVDEAG…SFAPVAEVLR (186 aa)) is the RNase H type-2 domain. Aspartate 20, glutamate 21, and aspartate 112 together coordinate a divalent metal cation.

The protein belongs to the RNase HII family. Mn(2+) serves as cofactor. Requires Mg(2+) as cofactor.

Its subcellular location is the cytoplasm. It catalyses the reaction Endonucleolytic cleavage to 5'-phosphomonoester.. Its function is as follows. Endonuclease that specifically degrades the RNA of RNA-DNA hybrids. The sequence is that of Ribonuclease HII from Polaromonas sp. (strain JS666 / ATCC BAA-500).